The chain runs to 354 residues: MSCSLINEDFDLLKAAKNPGUGAKLSAGALDKLLKNFSVRNDDNLLVGFNTSDDAAVYKINDKTALISTIDFFPPVSGDPYIFGQVAAANSLSDIYAMGGEPKLALNLFCITKDMPEDMIKEILRGGFDKVYEAGAIVCGGHTIYDDSPKYGLAVNGFVHPKKILENSTAKEGDVLILTKPIGTGILLTASKADMSPPEELDRCYKIMAFLNAKARNIMVKYKINACTDITGFGLLGHLYEMGKGSGMSIEVDYKSVPIYKSVIESAEMGMMPAGVYSNRNFVGDNIVFENVPLAYQDLMFDPQTSGGLLISVDKEDAAALYEELSQALENTPCGKPAIIGLVTKRDEKILRVS.

Residue U21 is part of the active site. U21 is a non-standard amino acid (selenocysteine). Residues K24 and 51–53 (TSD) contribute to the ATP site. D54 contributes to the Mg(2+) binding site. ATP contacts are provided by residues D71, D94, and 141–143 (GHT). D94 is a Mg(2+) binding site. D229 serves as a coordination point for Mg(2+).

This sequence belongs to the selenophosphate synthase 1 family. Class I subfamily. In terms of assembly, homodimer. Mg(2+) serves as cofactor.

It catalyses the reaction hydrogenselenide + ATP + H2O = selenophosphate + AMP + phosphate + 2 H(+). Functionally, synthesizes selenophosphate from selenide and ATP. The chain is Selenide, water dikinase from Treponema denticola (strain ATCC 35405 / DSM 14222 / CIP 103919 / JCM 8153 / KCTC 15104).